Here is a 210-residue protein sequence, read N- to C-terminus: Tissue inhibitor of metalloproteinase (210 aa).

The N-terminal stretch at 1–27 is a signal peptide; sequence MDLRKHLGLLTLLLVAVFAFYGRPADA. Cys-28 contributes to the Zn(2+) binding site. Involved in metalloproteinase-binding stretches follow at residues 28 to 31 and 93 to 94; these read CSCM and DA. 5 disulfide bridges follow: Cys-28-Cys-96, Cys-30-Cys-118, Cys-145-Cys-195, Cys-150-Cys-155, and Cys-165-Cys-180. In terms of domain architecture, NTR spans 28–145; sequence CSCMPSHPQT…SGGYAKATNC (118 aa).

It belongs to the protease inhibitor I35 (TIMP) family. Expressed in heads of female and male adult flies. Expressed at the time of eclosion in unopened wings of adult flies. Strongly expressed at the tip of ovarian germarium region 1 where germline stem cells (GSCs) and cystoblasts reside and in region 2 of the germarium.

It localises to the secreted. Functionally, metalloproteinase inhibitor that acts on both matrix metalloproteinases Mmp1 and Mmp2 in vitro. Complexes with metalloproteinases and irreversibly inactivates them by binding to their catalytic zinc cofactor. Required for wing maturation which is the final step in morphogenesis of the adult fly. Involved in the negative regulation of developmental tissue invasion for imaginal disk eversion during metamorphosis by inhibiting Mmp-mediated basement membrane (BM) degradation. Required for oogenesis and for the long-term maintainance of germarial structure and shape in the adult ovaries. Required for maintaining composition and biophysical properties of the extracellular matrix (ECM), and for the normal organization and cyst production of the germline stem cell (GSC) niche. The sequence is that of Tissue inhibitor of metalloproteinase from Drosophila melanogaster (Fruit fly).